The chain runs to 53 residues: UPF0391 membrane protein PSEEN0090 (53 aa).

A run of 2 helical transmembrane segments spans residues W4 to A24 and G29 to G49.

This sequence belongs to the UPF0391 family.

Its subcellular location is the cell membrane. The polypeptide is UPF0391 membrane protein PSEEN0090 (Pseudomonas entomophila (strain L48)).